We begin with the raw amino-acid sequence, 438 residues long: Putative pectate lyase 14 (438 aa).

An N-terminal signal peptide occupies residues 1–26 (MVVARTLFSISATLIIFLALFLHVNA). N-linked (GlcNAc...) asparagine glycans are attached at residues asparagine 40, asparagine 46, and asparagine 73. Positions 236, 260, and 264 each coordinate Ca(2+). The active site involves arginine 316.

It belongs to the polysaccharide lyase 1 family. It depends on Ca(2+) as a cofactor.

The enzyme catalyses Eliminative cleavage of (1-&gt;4)-alpha-D-galacturonan to give oligosaccharides with 4-deoxy-alpha-D-galact-4-enuronosyl groups at their non-reducing ends.. Its pathway is glycan metabolism; pectin degradation; 2-dehydro-3-deoxy-D-gluconate from pectin: step 2/5. This is Putative pectate lyase 14 from Arabidopsis thaliana (Mouse-ear cress).